Here is a 301-residue protein sequence, read N- to C-terminus: Polyamine aminopropyltransferase (301 aa).

One can recognise a PABS domain in the interval 4-240 (WHWLLEWQTP…GLWGFVYGGV (237 aa)). Gln-33 provides a ligand contact to S-methyl-5'-thioadenosine. Residues His-64 and Glu-89 each coordinate spermidine. S-methyl-5'-thioadenosine contacts are provided by residues Asp-109 and 141–142 (DG). Catalysis depends on Asp-159, which acts as the Proton acceptor.

Belongs to the spermidine/spermine synthase family. In terms of assembly, homotrimer.

The protein localises to the cytoplasm. The enzyme catalyses S-adenosyl 3-(methylsulfanyl)propylamine + putrescine = S-methyl-5'-thioadenosine + spermidine + H(+). The catalysed reaction is S-adenosyl 3-(methylsulfanyl)propylamine + propane-1,3-diamine = norspermidine + S-methyl-5'-thioadenosine + H(+). It catalyses the reaction norspermidine + S-adenosyl 3-(methylsulfanyl)propylamine = norspermine + S-methyl-5'-thioadenosine + H(+). It carries out the reaction S-adenosyl 3-(methylsulfanyl)propylamine + spermidine = thermospermine + S-methyl-5'-thioadenosine + H(+). It functions in the pathway amine and polyamine biosynthesis; spermidine biosynthesis; spermidine from putrescine: step 1/1. Its activity is regulated as follows. Competitively inhibited by 5-methylthioadenosine, 5-methylthiotubercidin, S-adenosyl(5)-3-thiopropylamine and S-adenosyl-3-thio-l,8-diaminooctane. Involved in the biosynthesis of polyamines which are thought to support the growth of thermophilic microorganisms under high-temperature conditions. It seems that long-chain and branched-chain of polyamines effectively stabilize DNA and RNA, respectively. Catalyzes the irreversible transfer of a propylamine group from the amino donor S-adenosylmethioninamine (decarboxy-AdoMet) to various amine acceptors such as putrescine (1,4-diaminobutane), 1,3-diaminopropane, sym-norspermidine and spermidine. The biosynthesis of caldopentamine from norspermine has been also observed, but with a very low activity. The reaction involves a nucleophilic attack on the C-3 methylene of the propylamine moiety adjacent to the positively charged sulfur of decarboxy-AdoMet. S-adenosylmethioninamine is the only amino donor. In Saccharolobus solfataricus (strain ATCC 35092 / DSM 1617 / JCM 11322 / P2) (Sulfolobus solfataricus), this protein is Polyamine aminopropyltransferase.